Reading from the N-terminus, the 445-residue chain is Argininosuccinate synthase (445 aa).

ATP contacts are provided by residues 17 to 25 and A43; that span reads AFSGGLDTS. Residue Y99 coordinates L-citrulline. ATP contacts are provided by G129 and T131. Residues T131, N135, and D136 each contribute to the L-aspartate site. N135 serves as a coordination point for L-citrulline. ATP is bound at residue D136. L-citrulline-binding residues include R139 and S192. D194 provides a ligand contact to ATP. L-citrulline is bound by residues T201, E203, and E280.

Belongs to the argininosuccinate synthase family. Type 2 subfamily. Homotetramer.

It is found in the cytoplasm. The catalysed reaction is L-citrulline + L-aspartate + ATP = 2-(N(omega)-L-arginino)succinate + AMP + diphosphate + H(+). Its pathway is amino-acid biosynthesis; L-arginine biosynthesis; L-arginine from L-ornithine and carbamoyl phosphate: step 2/3. The protein is Argininosuccinate synthase of Gemmatimonas aurantiaca (strain DSM 14586 / JCM 11422 / NBRC 100505 / T-27).